The sequence spans 414 residues: Multifunctional CCA protein (414 aa).

Positions 8 and 11 each coordinate ATP. CTP contacts are provided by glycine 8 and arginine 11. Positions 21 and 23 each coordinate Mg(2+). Residues arginine 91, arginine 137, and arginine 140 each coordinate ATP. The CTP site is built by arginine 91, arginine 137, and arginine 140. One can recognise an HD domain in the interval 228–329 (TGIHTLMVLE…VKLFDKGDFW (102 aa)).

It belongs to the tRNA nucleotidyltransferase/poly(A) polymerase family. Bacterial CCA-adding enzyme type 1 subfamily. Monomer. Can also form homodimers and oligomers. Mg(2+) serves as cofactor. It depends on Ni(2+) as a cofactor.

The enzyme catalyses a tRNA precursor + 2 CTP + ATP = a tRNA with a 3' CCA end + 3 diphosphate. The catalysed reaction is a tRNA with a 3' CCA end + 2 CTP + ATP = a tRNA with a 3' CCACCA end + 3 diphosphate. In terms of biological role, catalyzes the addition and repair of the essential 3'-terminal CCA sequence in tRNAs without using a nucleic acid template. Adds these three nucleotides in the order of C, C, and A to the tRNA nucleotide-73, using CTP and ATP as substrates and producing inorganic pyrophosphate. tRNA 3'-terminal CCA addition is required both for tRNA processing and repair. Also involved in tRNA surveillance by mediating tandem CCA addition to generate a CCACCA at the 3' terminus of unstable tRNAs. While stable tRNAs receive only 3'-terminal CCA, unstable tRNAs are marked with CCACCA and rapidly degraded. The protein is Multifunctional CCA protein of Shewanella frigidimarina (strain NCIMB 400).